A 379-amino-acid polypeptide reads, in one-letter code: MHVIGLMSGTSVDGIDAALVEISGRELDLQVDLIAAQTYPYPDALRNQILAVCRGEPLSIEALAGLDDAIAMQFAQAAQSIQAEATLTAELIGSHGQTVFHRPPQGNLGYTLQIGRGAVIAHQTGINTVSNFRVADMAAGGQGAPLVSKLDICLLSHPEFYRCVQNIGGIGNVTYLPPLTDASQLGMGVKGWDTGPGNVLMDLAVAHFSKGELTYDADGAWAAQGNPCQPLIEEWLRHPFFQAPPPKSTGRELFSPDYLQTCLQTAASYQLSPADMLATLTDFTAATIVYNYDQFLPHPPDQVVLCGGGSRNGYLRQCLQQRLGGSTVLTTDDVGLNSDAKEAIAFAVLAYWQQLQIPGNVPAVTGASGPILLGELHLV.

9–16 (GTSVDGID) contributes to the ATP binding site.

Belongs to the anhydro-N-acetylmuramic acid kinase family.

It carries out the reaction 1,6-anhydro-N-acetyl-beta-muramate + ATP + H2O = N-acetyl-D-muramate 6-phosphate + ADP + H(+). It participates in amino-sugar metabolism; 1,6-anhydro-N-acetylmuramate degradation. Its pathway is cell wall biogenesis; peptidoglycan recycling. Its function is as follows. Catalyzes the specific phosphorylation of 1,6-anhydro-N-acetylmuramic acid (anhMurNAc) with the simultaneous cleavage of the 1,6-anhydro ring, generating MurNAc-6-P. Is required for the utilization of anhMurNAc either imported from the medium or derived from its own cell wall murein, and thus plays a role in cell wall recycling. The sequence is that of Anhydro-N-acetylmuramic acid kinase from Acaryochloris marina (strain MBIC 11017).